The following is a 345-amino-acid chain: G-protein coupled receptor family C group 5 member D (345 aa).

Residues 1 to 27 (MYKDCIESTGDYFLLCDAEGPWGIILE) are Extracellular-facing. Residues 28 to 48 (SLAILGIVVTILLLLAFLFLM) traverse the membrane as a helical segment. The Cytoplasmic portion of the chain corresponds to 49-63 (RKIQDCSQWNVLPTQ). The helical transmembrane segment at 64-84 (LLFLLSVLGLFGLAFAFIIEL) threads the bilayer. Topologically, residues 85 to 93 (NQQTAPVRY) are extracellular. The chain crosses the membrane as a helical span at residues 94-114 (FLFGVLFALCFSCLLAHASNL). At 115 to 123 (VKLVRGCVS) the chain is on the cytoplasmic side. The helical transmembrane segment at 124–144 (FSWTTILCIAIGCSLLQIIIA) threads the bilayer. The Extracellular portion of the chain corresponds to 145-167 (TEYVTLIMTRGMMFVNMTPCQLN). Residues 168–188 (VDFVVLLVYVLFLMALTFFVS) traverse the membrane as a helical segment. At 189–204 (KATFCGPCENWKQHGR) the chain is on the cytoplasmic side. The helical transmembrane segment at 205–225 (LIFITVLFSIIIWVVWISMLL) threads the bilayer. At 226 to 239 (RGNPQFQRQPQWDD) the chain is on the extracellular side. Residues 240–260 (PVVCIALVTNAWVFLLLYIVP) traverse the membrane as a helical segment. The Cytoplasmic portion of the chain corresponds to 261 to 345 (ELCILYRSCR…LSPQQDAGGV (85 aa)).

It belongs to the G-protein coupled receptor 3 family. In terms of assembly, homodimer. In terms of tissue distribution, widely expressed in the peripheral system. Expression pattern is high in pancreas, medium in kidney, small intestine, spleen and testis, low in lung, colon, leukocyte, prostate and thymus and not detectable in brain, heart, liver, placenta, skeletal muscle and ovary.

It localises to the cell membrane. In terms of biological role, G-protein coupled receptor involved in hard keratin expression and likely plays a role in the development of hair and nails. The chain is G-protein coupled receptor family C group 5 member D (GPRC5D) from Homo sapiens (Human).